Here is a 90-residue protein sequence, read N- to C-terminus: MPKADIHPEWYPEAKVYCNGEVVMTVGSTQPEIHVDVWSGNHPYFTGTQKIIDTEGRVERFMRKYSKQEGSGSKSNKSKSTKSKKGKGKK.

The interval 65–90 (YSKQEGSGSKSNKSKSTKSKKGKGKK) is disordered. Basic residues predominate over residues 76–90 (NKSKSTKSKKGKGKK).

This sequence belongs to the bacterial ribosomal protein bL31 family. Type A subfamily. In terms of assembly, part of the 50S ribosomal subunit.

Its function is as follows. Binds the 23S rRNA. This chain is Large ribosomal subunit protein bL31, found in Trichodesmium erythraeum (strain IMS101).